Here is a 165-residue protein sequence, read N- to C-terminus: UPF0262 protein Sala_0765 (165 aa).

It belongs to the UPF0262 family.

In Sphingopyxis alaskensis (strain DSM 13593 / LMG 18877 / RB2256) (Sphingomonas alaskensis), this protein is UPF0262 protein Sala_0765.